A 134-amino-acid chain; its full sequence is Small ribosomal subunit protein uS8c (134 aa).

This sequence belongs to the universal ribosomal protein uS8 family. In terms of assembly, part of the 30S ribosomal subunit.

Its subcellular location is the plastid. The protein localises to the chloroplast. In terms of biological role, one of the primary rRNA binding proteins, it binds directly to 16S rRNA central domain where it helps coordinate assembly of the platform of the 30S subunit. The chain is Small ribosomal subunit protein uS8c (rps8) from Daucus carota (Wild carrot).